Consider the following 96-residue polypeptide: Large ribosomal subunit protein bL28 (96 aa).

Belongs to the bacterial ribosomal protein bL28 family.

In Methylobacterium sp. (strain 4-46), this protein is Large ribosomal subunit protein bL28.